Reading from the N-terminus, the 459-residue chain is Vasoactive intestinal polypeptide receptor 1 (459 aa).

Residues 1–30 form the signal peptide; that stretch reads MRPPSPPHVRWLCVLAGALACALRPAGSQA. Residues 31–142 are Extracellular-facing; the sequence is ASPQHECEYL…EQQQTKFYNT (112 aa). Disulfide bonds link Cys37–Cys209, Cys50–Cys72, Cys63–Cys105, Cys86–Cys122, and Cys216–Cys286. Asn58, Asn69, and Asn100 each carry an N-linked (GlcNAc...) asparagine glycan. A helical membrane pass occupies residues 143-167; it reads VKTGYTIGYSLSLASLLVAMAILSL. The Cytoplasmic segment spans residues 168-175; the sequence is FRKLHCTR. Residues 176–197 traverse the membrane as a helical segment; that stretch reads NYIHMHLFMSFILRATAVFIKD. Topologically, residues 198–217 are extracellular; sequence MALFNSGEIDHCSEASVGCK. The chain crosses the membrane as a helical span at residues 218–242; sequence AAVVFFQYCVMANFFWLLVEGLYLY. At 243-255 the chain is on the cytoplasmic side; that stretch reads TLLAVSFFSERKY. The chain crosses the membrane as a helical span at residues 256–277; that stretch reads FWGYILIGWGVPSVFITIWTVV. Residues 278–293 lie on the Extracellular side of the membrane; sequence RIYFEDFGCWDTIINS. The N-linked (GlcNAc...) asparagine glycan is linked to Asn292. A helical transmembrane segment spans residues 294 to 318; that stretch reads SLWWIIKAPILLSILVNFVLFICII. At 319–340 the chain is on the cytoplasmic side; that stretch reads RILVQKLRPPDIGKNDSSPYSR. Residues 341-361 traverse the membrane as a helical segment; that stretch reads LAKSTLLLIPLFGIHYVMFAF. Residues 362–369 lie on the Extracellular side of the membrane; the sequence is FPDNFKAQ. Residues 370–393 form a helical membrane-spanning segment; sequence VKMVFELVVGSFQGFVVAILYCFL. Topologically, residues 394 to 459 are cytoplasmic; the sequence is NGEVQAELRR…SSFQAEVSLV (66 aa).

Belongs to the G-protein coupled receptor 2 family. In terms of assembly, interacts with ADCYAP1/PACAP; activated by both PACAP27 and PACAP38 neuropeptides. Interacts with VIP; the interaction results in VIPR1 activation. In terms of tissue distribution, in liver, lung, intestines, thymus and brain (mostly in the cerebral cortex and hippocampus).

It localises to the cell membrane. Its function is as follows. G protein-coupled receptor activated by the neuropeptides vasoactive intestinal peptide (VIP) and pituitary adenylate cyclase-activating polypeptide (ADCYAP1/PACAP). Binds VIP and both PACAP27 and PACAP38 bioactive peptides with the following order of ligand affinity VIP = PACAP27 &gt; PACAP38. Ligand binding causes a conformation change that triggers signaling via guanine nucleotide-binding proteins (G proteins) and modulates the activity of downstream effectors. Activates cAMP-dependent pathway. This is Vasoactive intestinal polypeptide receptor 1 from Rattus norvegicus (Rat).